The chain runs to 267 residues: tRNA pseudouridine synthase A (267 aa).

D54 functions as the Nucleophile in the catalytic mechanism. Y114 serves as a coordination point for substrate.

Belongs to the tRNA pseudouridine synthase TruA family. Homodimer.

The enzyme catalyses uridine(38/39/40) in tRNA = pseudouridine(38/39/40) in tRNA. Its function is as follows. Formation of pseudouridine at positions 38, 39 and 40 in the anticodon stem and loop of transfer RNAs. This chain is tRNA pseudouridine synthase A, found in Tropheryma whipplei (strain Twist) (Whipple's bacillus).